The chain runs to 353 residues: Photosystem II D2 protein (353 aa).

Thr-2 bears the N-acetylthreonine mark. Thr-2 carries the post-translational modification Phosphothreonine. The helical transmembrane segment at 41–61 (CAYFSLGGWLTGTTFVTSWYT) threads the bilayer. His-118 provides a ligand contact to chlorophyll a. A helical membrane pass occupies residues 125-141 (GFMLRQFELARSVQLRP). Residues Gln-130 and Asn-143 each contribute to the pheophytin a site. A helical membrane pass occupies residues 153 to 166 (VFVSVFLIYPLGQS). His-198 is a binding site for chlorophyll a. A helical membrane pass occupies residues 208 to 228 (AALLCAIHGATVENTLFEDGD). A plastoquinone is bound by residues His-215 and Phe-262. His-215 lines the Fe cation pocket. His-269 provides a ligand contact to Fe cation. Residues 279 to 295 (GLWMSAIGVVGLALNLR) traverse the membrane as a helical segment.

Belongs to the reaction center PufL/M/PsbA/D family. As to quaternary structure, PSII is composed of 1 copy each of membrane proteins PsbA, PsbB, PsbC, PsbD, PsbE, PsbF, PsbH, PsbI, PsbJ, PsbK, PsbL, PsbM, PsbT, PsbX, PsbY, PsbZ, Psb30/Ycf12, at least 3 peripheral proteins of the oxygen-evolving complex and a large number of cofactors. It forms dimeric complexes. The D1/D2 heterodimer binds P680, chlorophylls that are the primary electron donor of PSII, and subsequent electron acceptors. It shares a non-heme iron and each subunit binds pheophytin, quinone, additional chlorophylls, carotenoids and lipids. There is also a Cl(-1) ion associated with D1 and D2, which is required for oxygen evolution. The PSII complex binds additional chlorophylls, carotenoids and specific lipids. serves as cofactor.

It localises to the plastid. It is found in the chloroplast thylakoid membrane. It carries out the reaction 2 a plastoquinone + 4 hnu + 2 H2O = 2 a plastoquinol + O2. Its function is as follows. Photosystem II (PSII) is a light-driven water:plastoquinone oxidoreductase that uses light energy to abstract electrons from H(2)O, generating O(2) and a proton gradient subsequently used for ATP formation. It consists of a core antenna complex that captures photons, and an electron transfer chain that converts photonic excitation into a charge separation. The D1/D2 (PsbA/PsbD) reaction center heterodimer binds P680, the primary electron donor of PSII as well as several subsequent electron acceptors. D2 is needed for assembly of a stable PSII complex. The chain is Photosystem II D2 protein from Chara vulgaris (Common stonewort).